The following is a 187-amino-acid chain: High-affinity copper transporter ctrA2 (187 aa).

A run of 2 helical transmembrane segments spans residues 44–64 and 137–157; these read YAGTCIFLVVLAIINRCLVAF and AAIFLCITGVSYLLMLAVMTM.

It belongs to the copper transporter (Ctr) (TC 1.A.56) family. SLC31A subfamily.

Its subcellular location is the cell membrane. The catalysed reaction is Cu(2+)(in) = Cu(2+)(out). High-affinity copper transporter of plasma membrane that mediates copper uptake under low copper conditions. The mechanism driving the transmembrane transport of copper has still to be determined. Acts as a potential virulence factor. This Aspergillus fumigatus (strain ATCC MYA-4609 / CBS 101355 / FGSC A1100 / Af293) (Neosartorya fumigata) protein is High-affinity copper transporter ctrA2.